The sequence spans 1529 residues: DNA (cytosine-5)-methyltransferase 1B (1529 aa).

Disordered regions lie at residues 1-56 (MVKS…RAAC) and 674-706 (DDELEENEDEDAEEEAQIEEENVSKTPPSTRSR). The span at 21–35 (QKKDEDTTDKGKLDE) shows a compositional bias: basic and acidic residues. Positions 674–694 (DDELEENEDEDAEEEAQIEEE) are enriched in acidic residues. Residues 697 to 706 (SKTPPSTRSR) show a composition bias toward polar residues. BAH domains lie at 741–873 (LRIN…FSLP) and 910–1049 (ITYN…KQLP). In terms of domain architecture, SAM-dependent MTase C5-type spans 1093–1527 (LATLDIFAGC…RKLKEAVDAK (435 aa)). Residue cysteine 1198 is part of the active site.

It belongs to the class I-like SAM-binding methyltransferase superfamily. C5-methyltransferase family. In terms of tissue distribution, expressed in roots and inflorescences. Expressed in roots, panicles, anthers, pistils, endosperm and imbibed embryos. Expressed in tissues containing actively replicating and dividing cells, such as shoot and root meristems.

It is found in the nucleus. The catalysed reaction is a 2'-deoxycytidine in DNA + S-adenosyl-L-methionine = a 5-methyl-2'-deoxycytidine in DNA + S-adenosyl-L-homocysteine + H(+). Its function is as follows. Major CG methylase that methylates chromatin CpG residues and maintains DNA methylation. Plays a major role in genomic imprinting, regulation of embryogenesis and seed viability. Maintains DNA methylation at the FIE1 gene locus in the embryo. This chain is DNA (cytosine-5)-methyltransferase 1B (MET1B), found in Oryza sativa subsp. japonica (Rice).